The following is a 205-amino-acid chain: Protein N-terminal glutamine amidohydrolase (205 aa).

Active-site residues include Cys20, His74, and Asp90.

Belongs to the NTAQ1 family. As to quaternary structure, monomer.

It catalyses the reaction N-terminal L-glutaminyl-[protein] + H2O = N-terminal L-glutamyl-[protein] + NH4(+). Mediates the side-chain deamidation of N-terminal glutamine residues to glutamate, an important step in N-end rule pathway of protein degradation. Conversion of the resulting N-terminal glutamine to glutamate renders the protein susceptible to arginylation, polyubiquitination and degradation as specified by the N-end rule. Does not act on substrates with internal or C-terminal glutamine and does not act on non-glutamine residues in any position. The chain is Protein N-terminal glutamine amidohydrolase (tun) from Drosophila ananassae (Fruit fly).